Consider the following 347-residue polypeptide: Aromatic amino acid aminotransferase (347 aa).

Lysine 214 carries the N6-(pyridoxal phosphate)lysine modification.

The protein belongs to the class-II pyridoxal-phosphate-dependent aminotransferase family. As to quaternary structure, homodimer. The cofactor is pyridoxal 5'-phosphate.

It carries out the reaction an aromatic L-alpha-amino acid + 2-oxoglutarate = an aromatic oxo-acid + L-glutamate. Aminotransferase that catalyzes the conversion of aromatic amino acids and 2-oxoglutarate into corresponding aromatic oxo acids and L-glutamate. This is Aromatic amino acid aminotransferase from Mycobacteroides abscessus (strain ATCC 19977 / DSM 44196 / CCUG 20993 / CIP 104536 / JCM 13569 / NCTC 13031 / TMC 1543 / L948) (Mycobacterium abscessus).